Consider the following 946-residue polypeptide: Bifunctional glutamine synthetase adenylyltransferase/adenylyl-removing enzyme (946 aa).

Residues 1-440 form an adenylyl removase region; the sequence is MKPLSSPLQQ…VFNELIGDDE (440 aa). Positions 449–946 are adenylyl transferase; it reads SEQWRELWQD…ASWQKWLVEE (498 aa).

This sequence belongs to the GlnE family. The cofactor is Mg(2+).

The enzyme catalyses [glutamine synthetase]-O(4)-(5'-adenylyl)-L-tyrosine + phosphate = [glutamine synthetase]-L-tyrosine + ADP. The catalysed reaction is [glutamine synthetase]-L-tyrosine + ATP = [glutamine synthetase]-O(4)-(5'-adenylyl)-L-tyrosine + diphosphate. Involved in the regulation of glutamine synthetase GlnA, a key enzyme in the process to assimilate ammonia. When cellular nitrogen levels are high, the C-terminal adenylyl transferase (AT) inactivates GlnA by covalent transfer of an adenylyl group from ATP to specific tyrosine residue of GlnA, thus reducing its activity. Conversely, when nitrogen levels are low, the N-terminal adenylyl removase (AR) activates GlnA by removing the adenylyl group by phosphorolysis, increasing its activity. The regulatory region of GlnE binds the signal transduction protein PII (GlnB) which indicates the nitrogen status of the cell. This is Bifunctional glutamine synthetase adenylyltransferase/adenylyl-removing enzyme from Escherichia coli O45:K1 (strain S88 / ExPEC).